A 197-amino-acid chain; its full sequence is Recombination protein RecR (197 aa).

The segment at Cys56 to Cys71 adopts a C4-type zinc-finger fold. Residues Thr79–Pro174 enclose the Toprim domain.

The protein belongs to the RecR family.

In terms of biological role, may play a role in DNA repair. It seems to be involved in an RecBC-independent recombinational process of DNA repair. It may act with RecF and RecO. This is Recombination protein RecR from Rhodospirillum rubrum (strain ATCC 11170 / ATH 1.1.1 / DSM 467 / LMG 4362 / NCIMB 8255 / S1).